Consider the following 918-residue polypeptide: UPF0182 protein CPR_0011 (918 aa).

A run of 7 helical transmembrane segments spans residues 8 to 28 (TVLI…NFII), 46 to 66 (LIAI…VIAI), 91 to 111 (FLLS…TTQW), 151 to 171 (AISL…ALGF), 200 to 220 (LAVL…LKSY), 243 to 263 (IFYK…FISI), and 271 to 291 (IIIS…VAIF).

This sequence belongs to the UPF0182 family.

The protein resides in the cell membrane. The polypeptide is UPF0182 protein CPR_0011 (Clostridium perfringens (strain SM101 / Type A)).